A 258-amino-acid polypeptide reads, in one-letter code: MGKRATTSVRREELNRGAWTDHEDKILRDYITTHGEGKWSTLPNQAGLKRCGKSCRLRWKNYLRPGIKRGNISSDEEELIIRLHNLLGNRWSLIAGRLPGRTDNEIKNHWNSNLRKRLPKTQTKQPKRIKHSTNNENNVCVIRTKAIRCSKTLLFSDLSLQKKSSTSPLPLKEQEMDQGGSSLMGDLEFDFDRIHSEFHFPDLMDFDGLDCGNVTSLVSSNEILGELVPAQGNLDLNRPFTSCHHRGDDEDWLRDFTC.

HTH myb-type domains follow at residues 11-63 and 64-118; these read REEL…KNYL and RPGI…RKRL. 2 consecutive DNA-binding regions (H-T-H motif) follow at residues 39 to 63 and 91 to 114; these read WSTL…KNYL and WSLI…NSNL. 47–54 provides a ligand contact to ATP; that stretch reads GLKRCGKS.

As to quaternary structure, interacts with BHLH2/EGL3/MYC146, BHLH12/MYC1 and BHLH42/TT8. In terms of tissue distribution, expressed at a high level in immature siliques and at a lower level in flowers. Undetected in young seedlings, roots, leaves and inflorescence stems.

The protein resides in the nucleus. In terms of biological role, transcription activator, when associated with BHLH2/EGL3/MYC146, BHLH12/MYC1, or BHLH42/TT8. Involved in the control of flavonoid late metabolism in developing siliques. Plays a key role in determining the tissue-specific activation of leucoanthocyanidin reductase (BANYULS). The chain is Transcription factor TT2 (TT2) from Arabidopsis thaliana (Mouse-ear cress).